A 1388-amino-acid chain; its full sequence is Dicer-like protein 2 (1388 aa).

The Helicase ATP-binding domain maps to 23–203 (MLEASMKENI…LLTVESNLDA (181 aa)). Residue 36–43 (MDTGSGKT) coordinates ATP. Positions 144–147 (DEAH) match the DEAH box motif. A Helicase C-terminal domain is found at 371-537 (SLLNFLDSLD…DDERQLQSVS (167 aa)). Positions 564–658 (AMAHLHHFCA…LPLTKRPELK (95 aa)) constitute a Dicer dsRNA-binding fold domain. 2 consecutive RNase III domains span residues 919–1059 (ATRL…MDGG) and 1098–1281 (NERL…VDSG). 3 residues coordinate Mg(2+): E1137, D1267, and E1270.

It belongs to the helicase family. Dicer subfamily. Mg(2+) serves as cofactor. The cofactor is Mn(2+).

Dicer-like endonuclease involved in cleaving double-stranded RNA in the RNA interference (RNAi) pathway. Produces 21 to 25 bp dsRNAs (siRNAs) which target the selective destruction of homologous RNAs leading to sequence-specific suppression of gene expression, called post-transcriptional gene silencing (PTGS). Part of a broad host defense response against viral infection and transposons. The sequence is that of Dicer-like protein 2 (dcl2) from Neosartorya fischeri (strain ATCC 1020 / DSM 3700 / CBS 544.65 / FGSC A1164 / JCM 1740 / NRRL 181 / WB 181) (Aspergillus fischerianus).